Reading from the N-terminus, the 877-residue chain is Probable Ras GTPase-activating-like protein ngap (877 aa).

Positions 72–218 (TPSATYESLI…KDQKERELWF (147 aa)) constitute a C2 domain. The interval 350–456 (SDDGDISGLK…ETINLSSSIN (107 aa)) is disordered. Positions 389–409 (TTATTTPSSTPSTPISPSSQS) are enriched in low complexity. A compositionally biased stretch (polar residues) spans 410–425 (NNIKTPDSKTRSSSNA). Composition is skewed to low complexity over residues 426–438 (STNT…KSTG) and 447–456 (ETINLSSSIN). One can recognise a Ras-GAP domain in the interval 591–802 (GKCLYLLKSL…ENMKSFINTL (212 aa)). Residues 820 to 848 (LEKELACLYRHLIKQRQDMAEEMESTESE) adopt a coiled-coil conformation.

Functionally, may function as a Ras GTPase-activating protein. The protein is Probable Ras GTPase-activating-like protein ngap (ngap) of Dictyostelium discoideum (Social amoeba).